A 178-amino-acid polypeptide reads, in one-letter code: Acireductone dioxygenase (178 aa).

Fe(2+) is bound by residues H100, H102, E106, and H145. Positions 100, 102, 106, and 145 each coordinate Ni(2+).

It belongs to the acireductone dioxygenase (ARD) family. In terms of assembly, monomer. Requires Fe(2+) as cofactor. Ni(2+) serves as cofactor.

It carries out the reaction 1,2-dihydroxy-5-(methylsulfanyl)pent-1-en-3-one + O2 = 3-(methylsulfanyl)propanoate + CO + formate + 2 H(+). It catalyses the reaction 1,2-dihydroxy-5-(methylsulfanyl)pent-1-en-3-one + O2 = 4-methylsulfanyl-2-oxobutanoate + formate + 2 H(+). It functions in the pathway amino-acid biosynthesis; L-methionine biosynthesis via salvage pathway; L-methionine from S-methyl-5-thio-alpha-D-ribose 1-phosphate: step 5/6. Catalyzes 2 different reactions between oxygen and the acireductone 1,2-dihydroxy-3-keto-5-methylthiopentene (DHK-MTPene) depending upon the metal bound in the active site. Fe-containing acireductone dioxygenase (Fe-ARD) produces formate and 2-keto-4-methylthiobutyrate (KMTB), the alpha-ketoacid precursor of methionine in the methionine recycle pathway. Ni-containing acireductone dioxygenase (Ni-ARD) produces methylthiopropionate, carbon monoxide and formate, and does not lie on the methionine recycle pathway. This is Acireductone dioxygenase from Bacillus velezensis (strain DSM 23117 / BGSC 10A6 / LMG 26770 / FZB42) (Bacillus amyloliquefaciens subsp. plantarum).